Consider the following 165-residue polypeptide: MSAVASIKEFFNTFFLLELLKGMKLTGRHFLSPAITVQFPEEKTPLSPRFRGLHALRRYENGEERCIACKLCEAVCPALAITIESEVRDDGSRRTTRYDIDLTKCIFCGFCEESCPVDSIVETHIFEYHGEKRGDLYFTKDMLLAVGDRYENEIAANKEADAAYR.

2 4Fe-4S ferredoxin-type domains span residues 57–86 and 96–125; these read RRYENGEERCIACKLCEAVCPALAITIESE and TRYDIDLTKCIFCGFCEESCPVDSIVETHI. Positions 66, 69, 72, 76, 105, 108, 111, and 115 each coordinate [4Fe-4S] cluster.

The protein belongs to the complex I 23 kDa subunit family. As to quaternary structure, NDH-1 is composed of 14 different subunits. Subunits NuoA, H, J, K, L, M, N constitute the membrane sector of the complex. [4Fe-4S] cluster serves as cofactor.

The protein localises to the cell inner membrane. The enzyme catalyses a quinone + NADH + 5 H(+)(in) = a quinol + NAD(+) + 4 H(+)(out). Its function is as follows. NDH-1 shuttles electrons from NADH, via FMN and iron-sulfur (Fe-S) centers, to quinones in the respiratory chain. The immediate electron acceptor for the enzyme in this species is believed to be ubiquinone. Couples the redox reaction to proton translocation (for every two electrons transferred, four hydrogen ions are translocated across the cytoplasmic membrane), and thus conserves the redox energy in a proton gradient. The chain is NADH-quinone oxidoreductase subunit I from Methylibium petroleiphilum (strain ATCC BAA-1232 / LMG 22953 / PM1).